Consider the following 1222-residue polypeptide: PAN2-PAN3 deadenylation complex catalytic subunit PAN2 (1222 aa).

WD repeat units follow at residues 104 to 143 and 276 to 315; these read PEMT…IVDQ and ANVA…HFNE. Positions 316-451 are linker; that stretch reads IGKETEFSDI…GLKINGETKE (136 aa). Residues 452–821 enclose the USP domain; the sequence is DPLLKYSNVE…SPCTLAYQIS (370 aa). Positions 871–1027 constitute an Exonuclease domain; the sequence is ALDTEFVDLE…WAVFKEYIQE (157 aa). A divalent metal cation-binding residues include D873, E875, and D982. The disordered stretch occupies residues 1035 to 1067; that stretch reads TSITTTTNPNIHDANTSTTTTTAITTTPPEGHD. The span at 1050–1061 shows a compositional bias: low complexity; sequence TSTTTTTAITTT. Residue D1071 participates in a divalent metal cation binding. Disordered regions lie at residues 1110 to 1152 and 1167 to 1222; these read PARY…LSGR and ASVT…SPMR. The span at 1119–1133 shows a compositional bias: low complexity; it reads PNPNNNNINNGVNPN. Over residues 1134–1144 the composition is skewed to polar residues; that stretch reads GLSTPGSTNPI. Low complexity predominate over residues 1180–1191; that stretch reads NGSMSGSTPSTP. The span at 1207 to 1216 shows a compositional bias: gly residues; it reads SFGGAKGLTF.

It belongs to the peptidase C19 family. PAN2 subfamily. As to quaternary structure, forms a heterotrimer with an asymmetric homodimer of the regulatory subunit PAN3 to form the poly(A)-nuclease (PAN) deadenylation complex. The cofactor is a divalent metal cation.

It is found in the cytoplasm. It carries out the reaction Exonucleolytic cleavage of poly(A) to 5'-AMP.. Positively regulated by the regulatory subunit PAN3. Catalytic subunit of the poly(A)-nuclease (PAN) deadenylation complex, one of two cytoplasmic mRNA deadenylases involved in mRNA turnover. PAN specifically shortens poly(A) tails of RNA and the activity is stimulated by poly(A)-binding protein PAB1. PAN deadenylation is followed by rapid degradation of the shortened mRNA tails by the CCR4-NOT complex. Deadenylated mRNAs are then degraded by two alternative mechanisms, namely exosome-mediated 3'-5' exonucleolytic degradation, or deadenylation-dependent mRNA decaping and subsequent 5'-3' exonucleolytic degradation by XRN1. May also be involved in post-transcriptional maturation of mRNA poly(A) tails. This Coccidioides immitis (strain RS) (Valley fever fungus) protein is PAN2-PAN3 deadenylation complex catalytic subunit PAN2.